Here is a 292-residue protein sequence, read N- to C-terminus: RNA-binding P34 protein (292 aa).

Residues 29 to 46 form a helical membrane-spanning segment; the sequence is CAIYTVACRILFLSVGFM. Positions 219–292 are RNA-binding; sequence EGFKSPQVEY…NFKAKNKNNE (74 aa).

It localises to the host endoplasmic reticulum membrane. In terms of biological role, acts as a ssRNA-binding protein that may be involved in targeting RNA2 to replication sites or facilitating RNA2 replication. This is RNA-binding P34 protein from Lettuce infectious yellows virus (isolate United States/92) (LIYV).